The sequence spans 180 residues: Bifunctional protein PyrR (180 aa).

A PRPP-binding motif is present at residues 99–111 (VILVDDVLYTCRT).

It belongs to the purine/pyrimidine phosphoribosyltransferase family. PyrR subfamily. Homodimer and homohexamer; in equilibrium.

The enzyme catalyses UMP + diphosphate = 5-phospho-alpha-D-ribose 1-diphosphate + uracil. Functionally, regulates transcriptional attenuation of the pyrimidine nucleotide (pyr) operon by binding in a uridine-dependent manner to specific sites on pyr mRNA. This disrupts an antiterminator hairpin in the RNA and favors formation of a downstream transcription terminator, leading to a reduced expression of downstream genes. Its function is as follows. Also displays a weak uracil phosphoribosyltransferase activity which is not physiologically significant. The protein is Bifunctional protein PyrR of Clostridium botulinum (strain Alaska E43 / Type E3).